The following is a 569-amino-acid chain: Small ribosomal subunit protein bS1 (569 aa).

6 consecutive S1 motif domains span residues 52–116 (GAIL…LSRE), 134–199 (GSIV…VSRR), 220–288 (GERR…LGLK), 305–375 (GKRV…LGLK), 392–462 (GLRV…LGVK), and 479–548 (GSDI…LSIK).

It belongs to the bacterial ribosomal protein bS1 family.

In terms of biological role, binds mRNA; thus facilitating recognition of the initiation point. It is needed to translate mRNA with a short Shine-Dalgarno (SD) purine-rich sequence. This chain is Small ribosomal subunit protein bS1 (rpsA), found in Chlamydia trachomatis serovar D (strain ATCC VR-885 / DSM 19411 / UW-3/Cx).